The sequence spans 132 residues: Sec-independent protein translocase protein TatB (132 aa).

The helical transmembrane segment at 1 to 21 (MFDIGFWELVLISVVGLVVLG) threads the bilayer. Residues 70–132 (GMEDLSPELK…KVSAADKKAE (63 aa)) are disordered. Basic and acidic residues-rich tracts occupy residues 96 to 108 (YADK…ETAK) and 115 to 132 (SAEK…KKAE).

It belongs to the TatB family. As to quaternary structure, the Tat system comprises two distinct complexes: a TatABC complex, containing multiple copies of TatA, TatB and TatC subunits, and a separate TatA complex, containing only TatA subunits. Substrates initially bind to the TatABC complex, which probably triggers association of the separate TatA complex to form the active translocon.

The protein localises to the cell inner membrane. Functionally, part of the twin-arginine translocation (Tat) system that transports large folded proteins containing a characteristic twin-arginine motif in their signal peptide across membranes. Together with TatC, TatB is part of a receptor directly interacting with Tat signal peptides. TatB may form an oligomeric binding site that transiently accommodates folded Tat precursor proteins before their translocation. This is Sec-independent protein translocase protein TatB from Vibrio parahaemolyticus serotype O3:K6 (strain RIMD 2210633).